Here is a 476-residue protein sequence, read N- to C-terminus: Homeobox even-skipped homolog protein 2 (476 aa).

2 disordered regions span residues Thr-82–Asp-113 and Lys-142–Ala-185. 2 stretches are compositionally biased toward low complexity: residues Ser-84–Ala-96 and Ser-147–Gly-159. Residues Ser-160–Ser-183 are compositionally biased toward gly residues. The segment at residues Val-188–Arg-247 is a DNA-binding region (homeobox).

It belongs to the even-skipped homeobox family.

Its subcellular location is the nucleus. The chain is Homeobox even-skipped homolog protein 2 (EVX2) from Homo sapiens (Human).